A 417-amino-acid chain; its full sequence is NADH-quinone oxidoreductase subunit D (417 aa).

Belongs to the complex I 49 kDa subunit family. NDH-1 is composed of 14 different subunits. Subunits NuoB, C, D, E, F, and G constitute the peripheral sector of the complex.

It is found in the cell inner membrane. It catalyses the reaction a quinone + NADH + 5 H(+)(in) = a quinol + NAD(+) + 4 H(+)(out). NDH-1 shuttles electrons from NADH, via FMN and iron-sulfur (Fe-S) centers, to quinones in the respiratory chain. The immediate electron acceptor for the enzyme in this species is believed to be ubiquinone. Couples the redox reaction to proton translocation (for every two electrons transferred, four hydrogen ions are translocated across the cytoplasmic membrane), and thus conserves the redox energy in a proton gradient. The protein is NADH-quinone oxidoreductase subunit D of Burkholderia vietnamiensis (strain G4 / LMG 22486) (Burkholderia cepacia (strain R1808)).